A 143-amino-acid polypeptide reads, in one-letter code: Transcriptional regulator MraZ (143 aa).

SpoVT-AbrB domains follow at residues 5–47 (EYQH…PQEE) and 76–119 (ASEC…SKSE).

This sequence belongs to the MraZ family. Forms oligomers.

Its subcellular location is the cytoplasm. The protein resides in the nucleoid. In Listeria welshimeri serovar 6b (strain ATCC 35897 / DSM 20650 / CCUG 15529 / CIP 8149 / NCTC 11857 / SLCC 5334 / V8), this protein is Transcriptional regulator MraZ.